A 147-amino-acid chain; its full sequence is Small ribosomal subunit protein uS12 (147 aa).

This sequence belongs to the universal ribosomal protein uS12 family. As to quaternary structure, part of the 30S ribosomal subunit.

Its function is as follows. With S4 and S5 plays an important role in translational accuracy. Located at the interface of the 30S and 50S subunits. In Saccharolobus solfataricus (strain ATCC 35092 / DSM 1617 / JCM 11322 / P2) (Sulfolobus solfataricus), this protein is Small ribosomal subunit protein uS12.